Consider the following 433-residue polypeptide: Pyrimidine-nucleoside phosphorylase (433 aa).

81–83 serves as a coordination point for phosphate; that stretch reads KHS. Residues glycine 88 and threonine 90 each contribute to the K(+) site. Residues threonine 92, 108-110, and threonine 120 contribute to the phosphate site; that span reads KMS. The substrate site is built by arginine 168 and lysine 187. K(+) is bound by residues leucine 243, alanine 246, and glutamate 255.

The protein belongs to the thymidine/pyrimidine-nucleoside phosphorylase family. Homodimer. The cofactor is K(+).

The enzyme catalyses uridine + phosphate = alpha-D-ribose 1-phosphate + uracil. It catalyses the reaction thymidine + phosphate = 2-deoxy-alpha-D-ribose 1-phosphate + thymine. It carries out the reaction 2'-deoxyuridine + phosphate = 2-deoxy-alpha-D-ribose 1-phosphate + uracil. Catalyzes phosphorolysis of the pyrimidine nucleosides uridine, thymidine and 2'-deoxyuridine with the formation of the corresponding pyrimidine base and ribose-1-phosphate. The polypeptide is Pyrimidine-nucleoside phosphorylase (pdp) (Staphylococcus epidermidis (strain ATCC 35984 / DSM 28319 / BCRC 17069 / CCUG 31568 / BM 3577 / RP62A)).